The chain runs to 80 residues: Toxin Acra I-2 (80 aa).

Residues 1–22 (MMKLALFSIIVILFSLIGSIHG) form the signal peptide. An LCN-type CS-alpha/beta domain is found at 25–80 (VPGNYPLDSSGNKYPCTVLGDNQSCIDVCKKHGVKYGYCYSFKCWCEFLEDKNVSI). Disulfide bonds link cysteine 40/cysteine 63, cysteine 49/cysteine 68, and cysteine 53/cysteine 70.

In terms of tissue distribution, expressed by the venom gland.

Its subcellular location is the secreted. Functionally, probable neurotoxin that inhibits ion channels. Is toxic to mice. Is about 2.8% of the total protein in the venom. In Androctonus crassicauda (Arabian fat-tailed scorpion), this protein is Toxin Acra I-2.